The following is a 419-amino-acid chain: UDP-N-acetylglucosamine 1-carboxyvinyltransferase (419 aa).

22 to 23 (KN) is a binding site for phosphoenolpyruvate. A UDP-N-acetyl-alpha-D-glucosamine-binding site is contributed by arginine 95. Cysteine 119 acts as the Proton donor in catalysis. 2-(S-cysteinyl)pyruvic acid O-phosphothioketal is present on cysteine 119. UDP-N-acetyl-alpha-D-glucosamine contacts are provided by residues 164-167 (KVSV), aspartate 308, and isoleucine 330.

Belongs to the EPSP synthase family. MurA subfamily.

The protein localises to the cytoplasm. It catalyses the reaction phosphoenolpyruvate + UDP-N-acetyl-alpha-D-glucosamine = UDP-N-acetyl-3-O-(1-carboxyvinyl)-alpha-D-glucosamine + phosphate. It participates in cell wall biogenesis; peptidoglycan biosynthesis. Functionally, cell wall formation. Adds enolpyruvyl to UDP-N-acetylglucosamine. In Rickettsia akari (strain Hartford), this protein is UDP-N-acetylglucosamine 1-carboxyvinyltransferase.